Here is a 229-residue protein sequence, read N- to C-terminus: DNA repair protein RecO (229 aa).

The protein belongs to the RecO family.

Involved in DNA repair and RecF pathway recombination. This Legionella pneumophila (strain Lens) protein is DNA repair protein RecO.